The chain runs to 928 residues: Interphotoreceptor matrix proteoglycan 1 (928 aa).

The first 20 residues, methionine 1–glycine 20, serve as a signal peptide directing secretion. Positions serine 26–lysine 50 are disordered. The span at asparagine 29–threonine 49 shows a compositional bias: basic and acidic residues. An N-linked (GlcNAc...) asparagine glycan is attached at asparagine 143. The segment covering glutamine 164 to aspartate 182 has biased composition (basic and acidic residues). A disordered region spans residues glutamine 164–proline 191. N-linked (GlcNAc...) asparagine glycans are attached at residues asparagine 203 and asparagine 212. In terms of domain architecture, SEA 1 spans alanine 231 to glutamine 356. 2 disordered regions span residues leucine 441–isoleucine 481 and alanine 494–isoleucine 522. Residues proline 466–aspartate 477 are compositionally biased toward basic and acidic residues. An SEA 2 domain is found at lysine 735 to glutamine 848. Asparagine 756 and asparagine 780 each carry an N-linked (GlcNAc...) asparagine glycan. The Heparin- and hyaluronan-binding signature appears at lysine 785–arginine 793. Residues asparagine 794 and asparagine 812 are each glycosylated (N-linked (GlcNAc...) asparagine).

Post-translationally, highly glycosylated (N- and O-linked carbohydrates and sialic acid). Abundantly expressed in the retina (at protein level). Localizes to the photoreceptor layer of the interphotoreceptor matrix of the retina (at protein level).

It is found in the cell projection. It localises to the cilium. The protein localises to the photoreceptor outer segment. The protein resides in the secreted. Its subcellular location is the extracellular space. It is found in the extracellular matrix. It localises to the interphotoreceptor matrix. The protein localises to the photoreceptor inner segment. Functionally, chondroitin sulfate-, heparin- and hyaluronan-binding protein. May serve to form a basic macromolecular scaffold comprising the insoluble interphotoreceptor matrix. The sequence is that of Interphotoreceptor matrix proteoglycan 1 from Gallus gallus (Chicken).